The sequence spans 201 residues: UPF0301 protein RHECIAT_CH0001061 (201 aa).

This sequence belongs to the UPF0301 (AlgH) family.

This Rhizobium etli (strain CIAT 652) protein is UPF0301 protein RHECIAT_CH0001061.